Here is a 155-residue protein sequence, read N- to C-terminus: Small ribosomal subunit protein uS7 (155 aa).

The protein belongs to the universal ribosomal protein uS7 family. As to quaternary structure, part of the 30S ribosomal subunit. Contacts proteins S9 and S11.

Its function is as follows. One of the primary rRNA binding proteins, it binds directly to 16S rRNA where it nucleates assembly of the head domain of the 30S subunit. Is located at the subunit interface close to the decoding center, probably blocks exit of the E-site tRNA. In Chlorobium phaeobacteroides (strain BS1), this protein is Small ribosomal subunit protein uS7.